Reading from the N-terminus, the 371-residue chain is 4-hydroxybutyrate dehydrogenase (371 aa).

NAD(+)-binding positions include 88–92 (GSVID), 126–130 (TTCGT), and lysine 148. Fe cation is bound by residues aspartate 182, histidine 186, histidine 253, and histidine 267. Histidine 267 contributes to the NAD(+) binding site.

The protein belongs to the iron-containing alcohol dehydrogenase family. In terms of assembly, homodimer. Requires Fe(2+) as cofactor. It depends on Cu(2+) as a cofactor.

The catalysed reaction is 4-hydroxybutanoate + NAD(+) = succinate semialdehyde + NADH + H(+). Inactivated by oxygen. Functionally, involved in the anaerobic succinate degradation pathway. Catalyzes the interconversion of gamma-hydroxybutyrate (GHB) and succinic semialdehyde (SSA). The chain is 4-hydroxybutyrate dehydrogenase from Clostridium kluyveri (strain ATCC 8527 / DSM 555 / NBRC 12016 / NCIMB 10680 / K1).